The following is a 706-amino-acid chain: Glycine--tRNA ligase beta subunit (706 aa).

It belongs to the class-II aminoacyl-tRNA synthetase family. In terms of assembly, tetramer of two alpha and two beta subunits.

It is found in the cytoplasm. The enzyme catalyses tRNA(Gly) + glycine + ATP = glycyl-tRNA(Gly) + AMP + diphosphate. This is Glycine--tRNA ligase beta subunit from Hyphomonas neptunium (strain ATCC 15444).